Here is a 200-residue protein sequence, read N- to C-terminus: dITP/XTP pyrophosphatase (200 aa).

Thr8–Lys13 lines the substrate pocket. Asp69 functions as the Proton acceptor in the catalytic mechanism. A Mg(2+)-binding site is contributed by Asp69. Substrate is bound by residues Ser70, Phe154–Asp157, Lys177, and His182–Arg183.

It belongs to the HAM1 NTPase family. As to quaternary structure, homodimer. The cofactor is Mg(2+).

The enzyme catalyses XTP + H2O = XMP + diphosphate + H(+). It catalyses the reaction dITP + H2O = dIMP + diphosphate + H(+). The catalysed reaction is ITP + H2O = IMP + diphosphate + H(+). Its function is as follows. Pyrophosphatase that catalyzes the hydrolysis of nucleoside triphosphates to their monophosphate derivatives, with a high preference for the non-canonical purine nucleotides XTP (xanthosine triphosphate), dITP (deoxyinosine triphosphate) and ITP. Seems to function as a house-cleaning enzyme that removes non-canonical purine nucleotides from the nucleotide pool, thus preventing their incorporation into DNA/RNA and avoiding chromosomal lesions. This is dITP/XTP pyrophosphatase from Vibrio parahaemolyticus serotype O3:K6 (strain RIMD 2210633).